We begin with the raw amino-acid sequence, 601 residues long: Pyranose 2-oxidase (601 aa).

His151 bears the Tele-8alpha-FAD histidine mark. Residues Gln406 and His408 each contribute to the substrate site. His505 (proton acceptor) is an active-site residue. Residue Asn558 is part of the active site. A disordered region spans residues 577–601 (KLGKKGSHSGNRDDGDVDTDTDDDA). A compositionally biased stretch (acidic residues) spans 591–601 (GDVDTDTDDDA).

This sequence belongs to the GMC oxidoreductase family. As to quaternary structure, homotetramer. The cofactor is FAD.

The enzyme catalyses D-glucose + O2 = 2-dehydro-D-glucose + H2O2. Catalyzes the oxidation of various aldopyranoses and disaccharides on carbon-2 to the corresponding 2-keto sugars concomitant with the reduction of O(2) to H(2)O(2). The protein is Pyranose 2-oxidase (p2ox) of Emericella nidulans (strain FGSC A4 / ATCC 38163 / CBS 112.46 / NRRL 194 / M139) (Aspergillus nidulans).